The chain runs to 179 residues: Large ribosomal subunit protein uL6 (179 aa).

The protein belongs to the universal ribosomal protein uL6 family. In terms of assembly, part of the 50S ribosomal subunit.

Its function is as follows. This protein binds to the 23S rRNA, and is important in its secondary structure. It is located near the subunit interface in the base of the L7/L12 stalk, and near the tRNA binding site of the peptidyltransferase center. The sequence is that of Large ribosomal subunit protein uL6 from Gloeothece citriformis (strain PCC 7424) (Cyanothece sp. (strain PCC 7424)).